A 410-amino-acid polypeptide reads, in one-letter code: WD repeat and FYVE domain-containing protein 1 (410 aa).

6 WD repeats span residues 22–61 (GHQD…QYWP), 66–105 (TMAS…NKMN), 112–150 (AHQN…NMLG), 153–192 (FFTS…CSVI), 197–236 (GHEG…GRTL), and 240–279 (GHHD…EEAP). The FYVE-type zinc-finger motif lies at 281-352 (WLESDSCQKC…VCDSCYDSIK (72 aa)). The Zn(2+) site is built by Cys-287, Cys-290, Cys-314, Cys-317, Cys-322, Cys-325, Cys-344, and Cys-347. The WD 7 repeat unit spans residues 364–403 (EGKHNISHMSMDIARGLMVTCGTDRIVKIWDMTPVVGCSL). Position 408 is a phosphoserine (Ser-408).

As to quaternary structure, binds PtdIns3P in vitro with high specificity over other phosphoinositides. Interacts (via WD repeat 2) with tyrosine-phosphorylated TLR3 (via TIR domain) in response to poly(I:C). Interacts with TICAM1 in response to poly(I:C). Interacts with TLR4 in response to LPS.

Its subcellular location is the early endosome. In terms of biological role, positively regulates TLR3- and TLR4-mediated signaling pathways by bridging the interaction between TLR3 or TLR4 and TICAM1. Promotes TLR3/4 ligand-induced activation of transcription factors IRF3 and NF-kappa-B, as well as the production of IFN-beta and inflammatory cytokines. This is WD repeat and FYVE domain-containing protein 1 (WDFY1) from Homo sapiens (Human).